Consider the following 373-residue polypeptide: Spermidine/putrescine import ATP-binding protein PotA (373 aa).

Residues 6-236 (LSLSNLTKQF…PANLFTARFV (231 aa)) form the ABC transporter domain. 38–45 (GPSGCGKT) serves as a coordination point for ATP.

It belongs to the ABC transporter superfamily. Spermidine/putrescine importer (TC 3.A.1.11.1) family. As to quaternary structure, the complex is composed of two ATP-binding proteins (PotA), two transmembrane proteins (PotB and PotC) and a solute-binding protein (PotD).

The protein resides in the cell inner membrane. The catalysed reaction is ATP + H2O + polyamine-[polyamine-binding protein]Side 1 = ADP + phosphate + polyamineSide 2 + [polyamine-binding protein]Side 1.. In terms of biological role, part of the ABC transporter complex PotABCD involved in spermidine/putrescine import. Responsible for energy coupling to the transport system. The polypeptide is Spermidine/putrescine import ATP-binding protein PotA (Marinobacter nauticus (strain ATCC 700491 / DSM 11845 / VT8) (Marinobacter aquaeolei)).